A 73-amino-acid chain; its full sequence is MAAEPKAAVEVVKVDLFEDDDEFEEFEINEDWLEKEEVKEVSLQWEDDWDDDDVSDDFSRQLKKELENASEKK.

It belongs to the DSS1/SEM1 family. In terms of assembly, part of the 26S proteasome. Interacts with BRCA2B. Interacts with EER5. Interacts with UCH1 and UCH2.

Subunit of the 26S proteasome which plays a role in ubiquitin-dependent proteolysis. Also associates with the TREX-2 complex that is required for transcription-coupled mRNA export. This chain is Protein DSS1 HOMOLOG ON CHROMOSOME V, found in Arabidopsis thaliana (Mouse-ear cress).